The chain runs to 203 residues: ATP-dependent Clp protease proteolytic subunit (203 aa).

Ser107 (nucleophile) is an active-site residue. Residue His132 is part of the active site.

This sequence belongs to the peptidase S14 family. As to quaternary structure, fourteen ClpP subunits assemble into 2 heptameric rings which stack back to back to give a disk-like structure with a central cavity, resembling the structure of eukaryotic proteasomes.

Its subcellular location is the cytoplasm. The catalysed reaction is Hydrolysis of proteins to small peptides in the presence of ATP and magnesium. alpha-casein is the usual test substrate. In the absence of ATP, only oligopeptides shorter than five residues are hydrolyzed (such as succinyl-Leu-Tyr-|-NHMec, and Leu-Tyr-Leu-|-Tyr-Trp, in which cleavage of the -Tyr-|-Leu- and -Tyr-|-Trp bonds also occurs).. Its function is as follows. Cleaves peptides in various proteins in a process that requires ATP hydrolysis. Has a chymotrypsin-like activity. Plays a major role in the degradation of misfolded proteins. The protein is ATP-dependent Clp protease proteolytic subunit of Shewanella halifaxensis (strain HAW-EB4).